The chain runs to 106 residues: uncharacterized protein (106 aa).

2 helical membrane-spanning segments follow: residues 10 to 30 and 65 to 85; these read VYIQ…VAFV and LDFA…LLAY.

It localises to the membrane. This is an uncharacterized protein from Saccharomyces cerevisiae (strain ATCC 204508 / S288c) (Baker's yeast).